The sequence spans 150 residues: Aspartate 1-decarboxylase (150 aa).

Serine 24 functions as the Schiff-base intermediate with substrate; via pyruvic acid in the catalytic mechanism. Position 24 is a pyruvic acid (Ser) (serine 24). Threonine 56 serves as a coordination point for substrate. Tyrosine 57 serves as the catalytic Proton donor. 72 to 74 (GAA) contacts substrate.

It belongs to the PanD family. In terms of assembly, heterooctamer of four alpha and four beta subunits. Requires pyruvate as cofactor. Post-translationally, is synthesized initially as an inactive proenzyme, which is activated by self-cleavage at a specific serine bond to produce a beta-subunit with a hydroxyl group at its C-terminus and an alpha-subunit with a pyruvoyl group at its N-terminus.

The protein localises to the cytoplasm. It catalyses the reaction L-aspartate + H(+) = beta-alanine + CO2. It functions in the pathway cofactor biosynthesis; (R)-pantothenate biosynthesis; beta-alanine from L-aspartate: step 1/1. Catalyzes the pyruvoyl-dependent decarboxylation of aspartate to produce beta-alanine. In Xanthobacter autotrophicus (strain ATCC BAA-1158 / Py2), this protein is Aspartate 1-decarboxylase.